A 95-amino-acid chain; its full sequence is Co-chaperonin GroES (95 aa).

It belongs to the GroES chaperonin family. As to quaternary structure, heptamer of 7 subunits arranged in a ring. Interacts with the chaperonin GroEL.

It localises to the cytoplasm. In terms of biological role, together with the chaperonin GroEL, plays an essential role in assisting protein folding. The GroEL-GroES system forms a nano-cage that allows encapsulation of the non-native substrate proteins and provides a physical environment optimized to promote and accelerate protein folding. GroES binds to the apical surface of the GroEL ring, thereby capping the opening of the GroEL channel. The protein is Co-chaperonin GroES of Clostridium botulinum (strain ATCC 19397 / Type A).